The sequence spans 121 residues: Large ribosomal subunit protein uL18 (121 aa).

The protein belongs to the universal ribosomal protein uL18 family. As to quaternary structure, part of the 50S ribosomal subunit; part of the 5S rRNA/L5/L18/L25 subcomplex. Contacts the 5S and 23S rRNAs.

This is one of the proteins that bind and probably mediate the attachment of the 5S RNA into the large ribosomal subunit, where it forms part of the central protuberance. This is Large ribosomal subunit protein uL18 from Geobacter metallireducens (strain ATCC 53774 / DSM 7210 / GS-15).